The primary structure comprises 423 residues: Alpha-1-antichymotrypsin (423 aa).

The N-terminal stretch at 1 to 23 is a signal peptide; sequence MERMLPFLALGLLVAGFCPAVLC. Residues asparagine 93, asparagine 106, asparagine 127, asparagine 186, and asparagine 271 are each glycosylated (N-linked (GlcNAc...) asparagine). The segment at 369–394 is RCL; sequence GTEASAATAVKITLLSALVDPMTIVR.

Belongs to the serpin family. As to quaternary structure, interacts with DNAJC1. In terms of tissue distribution, plasma.

It localises to the secreted. Although its physiological function is unclear, it can inhibit neutrophil cathepsin G and mast cell chymase, both of which can convert angiotensin-1 to the active angiotensin-2. This is Alpha-1-antichymotrypsin (SERPINA3) from Pongo abelii (Sumatran orangutan).